The primary structure comprises 312 residues: Protein lon-1 (312 aa).

Positions 1–18 (MNYLLTALIALLAPISVA) are cleaved as a signal peptide. Positions 87–209 (EHNRYRRMVP…GHRNVFVCHY (123 aa)) constitute an SCP domain. N142 is a glycosylation site (N-linked (GlcNAc...) asparagine). The segment covering 265 to 284 (TTTTESTTTSTTTEEPTTTC) has biased composition (low complexity). Residues 265 to 312 (TTTTESTTTSTTTEEPTTTCEPDEPEAEGADNNQEEEEENNDGFRMRV) form a disordered region. Over residues 285-305 (EPDEPEAEGADNNQEEEEENN) the composition is skewed to acidic residues.

It belongs to the CRISP family. In terms of tissue distribution, expressed in hypodermal tissues.

Functionally, regulates body size morphogenesis, but does not affect male tail development. This chain is Protein lon-1 (lon-1), found in Caenorhabditis elegans.